A 152-amino-acid polypeptide reads, in one-letter code: Transcriptional repressor NrdR (152 aa).

Residues 3–34 fold into a zinc finger; it reads CPKCGSLNDKVVDTRQSKDGTVIRRRRECLDC. Positions 49–139 constitute an ATP-cone domain; that stretch reads IVVKKKNGTT…VYNEFQDIKD (91 aa).

The protein belongs to the NrdR family. Zn(2+) is required as a cofactor.

Negatively regulates transcription of bacterial ribonucleotide reductase nrd genes and operons by binding to NrdR-boxes. In Persephonella marina (strain DSM 14350 / EX-H1), this protein is Transcriptional repressor NrdR.